Consider the following 587-residue polypeptide: MEQGGGGGGNEVVEEASPISSRPPANNLEELMRFSAAADDGGLGGGGGGGGGGSASSSSGNRWPREETLALLRIRSDMDSTFRDATLKAPLWEHVSRKLLELGYKRSSKKCKEKFENVQKYYKRTKETRGGRHDGKAYKFFSQLEALNTTPPSSSLDVTPLSVANPILMPSSSSSPFPVFSQPQPQTQTQPPQTHNVSFTPTPPPLPLPSMGPIFTGVTFSSHSSSTASGMGSDDDDDDMDVDQANIAGSSSRKRKRGNRGGGGKMMELFEGLVRQVMQKQAAMQRSFLEALEKREQERLDREEAWKRQEMARLAREHEVMSQERAASASRDAAIISLIQKITGHTIQLPPSLSSQPPPPYQPPPAVTKRVAEPPLSTAQSQSQQPIMAIPQQQILPPPPPSHPHAHQPEQKQQQQPQQEMVMSSEQSSLPSSSRWPKAEILALINLRSGMEPRYQDNVPKGLLWEEISTSMKRMGYNRNAKRCKEKWENINKYYKKVKESNKKRPQDAKTCPYFHRLDLLYRNKVLGSGGGSSTSGLPQDQKQSPVTAMKPPQEGLVNVQQTHGSASTEEEEPIEESPQGTEKKTL.

Composition is skewed to gly residues over residues 1–10 and 41–54; these read MEQGGGGGGN and GGLG…GGGS. The interval 1-63 is disordered; that stretch reads MEQGGGGGGN…SASSSSGNRW (63 aa). In terms of domain architecture, Myb-like 1 spans 55–119; it reads ASSSSGNRWP…KCKEKFENVQ (65 aa). A Nuclear localization signal 1 motif is present at residues 96 to 103; the sequence is SRKLLELG. Positions 173 to 194 are enriched in low complexity; it reads SSSPFPVFSQPQPQTQTQPPQT. The segment at 173 to 264 is disordered; the sequence is SSSPFPVFSQ…RKRGNRGGGG (92 aa). The segment covering 201–210 has biased composition (pro residues); it reads PTPPPLPLPS. Residues 221 to 232 are compositionally biased toward low complexity; it reads SSHSSSTASGMG. A compositionally biased stretch (acidic residues) spans 233–242; it reads SDDDDDDMDV. Residues 285–328 adopt a coiled-coil conformation; sequence QRSFLEALEKREQERLDREEAWKRQEMARLAREHEVMSQERAAS. The interval 348–435 is disordered; sequence QLPPSLSSQP…EQSSLPSSSR (88 aa). Positions 356-366 are enriched in pro residues; that stretch reads QPPPPYQPPPA. 2 stretches are compositionally biased toward low complexity: residues 379-395 and 411-434; these read AQSQ…QQQI and QKQQ…PSSS. The region spanning 434–492 is the Myb-like 2 domain; that stretch reads SRWPKAEILALINLRSGMEPRYQDNVPKGLLWEEISTSMKRMGYNRNAKRCKEKWENIN. The Nuclear localization signal 2 signature appears at 472 to 479; sequence MKRMGYNR. The interval 530–587 is disordered; sequence GGGSSTSGLPQDQKQSPVTAMKPPQEGLVNVQQTHGSASTEEEEPIEESPQGTEKKTL. Polar residues-rich tracts occupy residues 538 to 547 and 559 to 568; these read LPQDQKQSPV and NVQQTHGSAS.

Mostly expressed in siliques, and, to a lower extent, in growing root hairs, leaves, stems, and flowers. Present in abaxial epidermal cells, predominantly in guard cells, pavement cells, and meristemoids.

It is found in the nucleus. Functionally, transcription repressor that binds specific DNA sequence such as GT3 box 5'-GGTAAA-3' in the SDD1 promoter. Negative regulator of water use efficiency (WUE) via the promotion of stomatal density and distribution by the transcription repression of SDD1. Regulates the expression of several cell cycle genes and endoreduplication, especially in trichomes where it prevents ploidy-dependent plant cell growth. Regulates negatively root hair growth by directly binding RSL4 promoter and repressing RSL4 expression. This is Trihelix transcription factor GTL1 from Arabidopsis thaliana (Mouse-ear cress).